The primary structure comprises 174 residues: Large ribosomal subunit protein uL10 (174 aa).

The protein belongs to the universal ribosomal protein uL10 family. Part of the ribosomal stalk of the 50S ribosomal subunit. The N-terminus interacts with L11 and the large rRNA to form the base of the stalk. The C-terminus forms an elongated spine to which L12 dimers bind in a sequential fashion forming a multimeric L10(L12)X complex.

Its function is as follows. Forms part of the ribosomal stalk, playing a central role in the interaction of the ribosome with GTP-bound translation factors. The sequence is that of Large ribosomal subunit protein uL10 from Coxiella burnetii (strain CbuK_Q154) (Coxiella burnetii (strain Q154)).